We begin with the raw amino-acid sequence, 156 residues long: Peptide deformylase 1 (156 aa).

Positions 90 and 132 each coordinate Fe cation. Residue Glu133 is part of the active site. Residue His136 participates in Fe cation binding.

It belongs to the polypeptide deformylase family. The cofactor is Fe(2+).

The catalysed reaction is N-terminal N-formyl-L-methionyl-[peptide] + H2O = N-terminal L-methionyl-[peptide] + formate. Removes the formyl group from the N-terminal Met of newly synthesized proteins. Requires at least a dipeptide for an efficient rate of reaction. N-terminal L-methionine is a prerequisite for activity but the enzyme has broad specificity at other positions. The chain is Peptide deformylase 1 from Bacillus anthracis.